The following is a 95-amino-acid chain: Putative regulatory protein Daud_1598 (95 aa).

It belongs to the RemA family.

The sequence is that of Putative regulatory protein Daud_1598 from Desulforudis audaxviator (strain MP104C).